A 180-amino-acid chain; its full sequence is MAESGKEKIKWTTTIIISSSLKSYEVATALENRSHKVRYSDSVENGSIIFSLSGVAFLLMDTKECLLSTEEIFLAKIEKFINIHQNSFLVLSAALHGPEEWKLMFRIQQRFLGCNLRILPVHNTVNAINLMCTIAKTTSKPYIDSICYRMITAKAYIIEQSPVWKTLQKIKLNSDSVNPN.

In terms of assembly, homooligomer. Interacts with SHOC, SYCP1 and SYCE3.

It is found in the chromosome. Plays a key role in reinforcing the integrity of the central element of the synaptonemal complex (SC) thereby stabilizing SC, ensuring progression of meiotic prophase I in male and female germ cells. Promotes homologous recombination and crossing-over in meiotic prophase I via its association with SHOC1. Required for the localization of TEX11 and MSH4 to recombination intermediates. The chain is Protein SPO16 homolog from Homo sapiens (Human).